We begin with the raw amino-acid sequence, 354 residues long: GTPase Obg (354 aa).

The region spanning M1–I159 is the Obg domain. The region spanning A160–R328 is the OBG-type G domain. Residues G166–S173, F191–T195, D213–G216, N280–D283, and S309–V311 each bind GTP. Residues S173 and T193 each contribute to the Mg(2+) site. Residues E335 to V345 show a composition bias toward acidic residues. Positions E335–P354 are disordered.

This sequence belongs to the TRAFAC class OBG-HflX-like GTPase superfamily. OBG GTPase family. As to quaternary structure, monomer. The cofactor is Mg(2+).

Its subcellular location is the cytoplasm. In terms of biological role, an essential GTPase which binds GTP, GDP and possibly (p)ppGpp with moderate affinity, with high nucleotide exchange rates and a fairly low GTP hydrolysis rate. Plays a role in control of the cell cycle, stress response, ribosome biogenesis and in those bacteria that undergo differentiation, in morphogenesis control. The protein is GTPase Obg of Caulobacter vibrioides (strain ATCC 19089 / CIP 103742 / CB 15) (Caulobacter crescentus).